The sequence spans 522 residues: Major facilitator-type transporter sorT (522 aa).

Residues 1 to 21 (MSHTEPKAPVNTGEVENGHLY) are disordered. 12 helical membrane-spanning segments follow: residues 52–72 (WFIA…SSAY), 89–109 (VFIV…AVWA), 121–141 (QILW…SAGS), 143–163 (NVAT…SPLV), 183–203 (TIYC…GGFV), 211–231 (WVQG…IVFI), 280–300 (WIFL…AIIY), 324–344 (IGGL…VYAI), 366–386 (LPPA…FAWT), 395–415 (VSII…LPIM), 427–447 (ASVL…FPLF), and 457–477 (IHWA…FPLI).

Belongs to the major facilitator superfamily. Sugar transporter (TC 2.A.1.1) family.

The protein localises to the membrane. Major facilitator-type transporter; part of the gene cluster that mediates the biosynthesis of sorbicillinoids, a diverse group of yellow secondary metabolites that restrict growth of competing pathogenic fungi but not of bacteria. This chain is Major facilitator-type transporter sorT, found in Penicillium rubens (strain ATCC 28089 / DSM 1075 / NRRL 1951 / Wisconsin 54-1255) (Penicillium chrysogenum).